The chain runs to 566 residues: ALBINO3-like protein 3, mitochondrial (566 aa).

A mitochondrion-targeting transit peptide spans 1–44; the sequence is MAFRRVLLSHLRRSHHTCSSLSPHHVSATTQPSIALALFQSRFF. 4 helical membrane-spanning segments follow: residues 139 to 159, 207 to 227, 249 to 269, and 301 to 321; these read WVVIATSTVAFRTALLPILIL, LWVPAYFSIQISCFFLWITSI, LTEIPNGLYGPLFPFLIAGLH, and LLTCALYFLSFQMPQGSLLYW. TPR repeat units follow at residues 386–419, 420–453, 465–498, and 507–540; these read PKELVALSAKYLSGGHKDKSIPLLRLALEKDPEY, LQAMIILGQALYQKDQFAEAAKCLEQAASKLLDT, IVASQWAGVSNIRQGKTSEGITHLERVANMKEPD, and LDALVLYSSAIFNEGRREEAAKYLRRVVAYDPSF. The disordered stretch occupies residues 547 to 566; sequence CEEDDTIPTSSSSNSTSKTS. The segment covering 555-566 has biased composition (low complexity); it reads TSSSSNSTSKTS.

It belongs to the OXA1/ALB3/YidC (TC 2.A.9.2) family.

It localises to the mitochondrion inner membrane. Probably required for the insertion of integral membrane proteins into the mitochondrial inner membrane. This is ALBINO3-like protein 3, mitochondrial (ALB3L3) from Arabidopsis thaliana (Mouse-ear cress).